A 237-amino-acid polypeptide reads, in one-letter code: Platelet-aggregating proteinase PA-BJ (237 aa).

A propeptide spanning residues 1–5 is cleaved from the precursor; the sequence is NSLVI. One can recognise a Peptidase S1 domain in the interval 6–229; sequence VVGGRPCKIN…YLPWIESIIA (224 aa). 6 disulfides stabilise this stretch: Cys12–Cys144, Cys31–Cys47, Cys79–Cys236, Cys123–Cys191, Cys155–Cys170, and Cys181–Cys205. N-linked (GlcNAc...) asparagine glycosylation is present at Asn25. A glycan (O-linked (GalNAc...) serine) is linked at Ser28. Residues His46 and Asp91 each act as charge relay system in the active site. Residue Ser185 is the Charge relay system of the active site.

This sequence belongs to the peptidase S1 family. Snake venom subfamily. Monomer. Expressed by the venom gland.

Its subcellular location is the secreted. Inhibited by PMSF. The amidolytic activity is also inhibited by benzamidine derivatives. In terms of biological role, snake venom serine protease that induces platelet aggregation through activation of protease-activated platelet receptors (PAR1/F2R and PAR4/F2RL3). On F2R, the cleavage occurs at Arg41-Ser42 (like thrombin cleavage), and Arg46-Asn47. In normal condition of hemostasis, the cleavage of the Arg41-Ser42 bond liberates a new N-terminus that functions as an agonist. However after envenomation, the cleavage of Arg46-Asn47 bond degrades this potential agonist. This may explain why the snake protease is less potent than thrombin in causing platelet aggregation and release reaction. On F2RL3, a thrombin-like activity has also been proven by calcium release from lung fibroblasts transfected with this receptor. Possesses amidolytic activities. The chain is Platelet-aggregating proteinase PA-BJ from Bothrops jararaca (Jararaca).